The primary structure comprises 543 residues: Formate--tetrahydrofolate ligase (543 aa).

54–61 (TPAGEGKT) provides a ligand contact to ATP.

This sequence belongs to the formate--tetrahydrofolate ligase family.

It catalyses the reaction (6S)-5,6,7,8-tetrahydrofolate + formate + ATP = (6R)-10-formyltetrahydrofolate + ADP + phosphate. The protein operates within one-carbon metabolism; tetrahydrofolate interconversion. The polypeptide is Formate--tetrahydrofolate ligase (Thermus thermophilus (strain ATCC BAA-163 / DSM 7039 / HB27)).